The following is a 136-amino-acid chain: Ribosome-binding factor A (136 aa).

Residues 116–136 are disordered; sequence AGNHKASDEEESDDKGHEDEQ.

It belongs to the RbfA family. In terms of assembly, monomer. Binds 30S ribosomal subunits, but not 50S ribosomal subunits or 70S ribosomes.

The protein resides in the cytoplasm. In terms of biological role, one of several proteins that assist in the late maturation steps of the functional core of the 30S ribosomal subunit. Associates with free 30S ribosomal subunits (but not with 30S subunits that are part of 70S ribosomes or polysomes). Required for efficient processing of 16S rRNA. May interact with the 5'-terminal helix region of 16S rRNA. The chain is Ribosome-binding factor A from Lachnoclostridium phytofermentans (strain ATCC 700394 / DSM 18823 / ISDg) (Clostridium phytofermentans).